Here is a 152-residue protein sequence, read N- to C-terminus: Protein FERTILITY RESTORER RF2, mitochondrial (152 aa).

The N-terminal 52 residues, 1–52, are a transit peptide targeting the mitochondrion; that stretch reads MSTLVTCSLPGAVTTHASTRRFGGSQFQTSQASCISFKREVSAKAVLRSVRC. Residues 52–69 are compositionally biased toward polar residues; that stretch reads CNATQTQSAQRKSSTATV. The disordered stretch occupies residues 52-101; it reads CNATQTQSAQRKSSTATVKRSDPKGKTQGPKLDDGSGGFPPFRFGKGGGG.

It localises to the mitochondrion. Functionally, non-functional allele of the RF2 fertility restorer of rice varieties with LD-type cytoplasmic male sterility (CMS). Non-functional RF2 alleles are found in japonica cultivars Taichung 65 and Nipponbare (AC F1SZ44), and is due to the presence of Thr-78 which replaces Ile-78 in the functional allele. Functional allele is found in the japonica cultivars Fukuyama and Owarihatamochi (AC F1SZ42), and indica cultivar Kasalath (AC F1SZ41). The polypeptide is Protein FERTILITY RESTORER RF2, mitochondrial (Oryza sativa subsp. japonica (Rice)).